The primary structure comprises 843 residues: N-acetyltransferase ESCO1 (843 aa).

Residues 1 to 78 form a disordered region; it reads MSIQEKSKEN…SASCSADKTA (78 aa). The segment covering 18–28 has biased composition (acidic residues); it reads SEDENLEEEVE. The segment covering 66–78 has biased composition (polar residues); it reads STRSASCSADKTA. A Phosphoserine modification is found at Ser202. Positions 262 to 300 are disordered; it reads NELRKSAHTQVSTSTKRPQIPLPLVPEHSDDQELEQAGK. Polar residues predominate over residues 269–278; it reads HTQVSTSTKR. Residue Lys335 forms a Glycyl lysine isopeptide (Lys-Gly) (interchain with G-Cter in SUMO2) linkage. Ser415 is modified (phosphoserine). The interval 546–584 is disordered; sequence DRTFPGSAPNQQHSVLSDEASINRKNRDVPPNHSQLKHD. The segment covering 566-584 has biased composition (basic and acidic residues); the sequence is SINRKNRDVPPNHSQLKHD. The segment at 620-644 adopts a CCHH-type zinc-finger fold; sequence VSCNICGMLYTASNPEDETQHLLFH. Acetyl-CoA-binding positions include 775 to 777, 783 to 788, and 815 to 817; these read IWV, RKKIAS, and TPD.

Belongs to the acetyltransferase family. ECO subfamily. In terms of assembly, the subunit structure is controversial. Monomer. Homodimer. Post-translationally, phosphorylated during mitosis.

The protein localises to the nucleus. It localises to the chromosome. The catalysed reaction is L-lysyl-[protein] + acetyl-CoA = N(6)-acetyl-L-lysyl-[protein] + CoA + H(+). Acetyltransferase required for the establishment of sister chromatid cohesion. Couples the processes of cohesion and DNA replication to ensure that only sister chromatids become paired together. In contrast to the structural cohesins, the deposition and establishment factors are required only during S phase. Acts by mediating the acetylation of cohesin component SMC3. The chain is N-acetyltransferase ESCO1 (Esco1) from Mus musculus (Mouse).